The primary structure comprises 120 residues: UPF0382 membrane protein SSP2132 (120 aa).

A run of 4 helical transmembrane segments spans residues 3–23, 46–66, 69–89, and 94–114; these read VFII…AFGA, MYHG…SINV, VGWL…ILAL, and IIGA…LMLV.

The protein belongs to the UPF0382 family.

Its subcellular location is the cell membrane. This is UPF0382 membrane protein SSP2132 from Staphylococcus saprophyticus subsp. saprophyticus (strain ATCC 15305 / DSM 20229 / NCIMB 8711 / NCTC 7292 / S-41).